The primary structure comprises 433 residues: UDP-N-acetylglucosamine 1-carboxyvinyltransferase (433 aa).

34 to 35 (KN) contributes to the phosphoenolpyruvate binding site. UDP-N-acetyl-alpha-D-glucosamine is bound at residue arginine 104. Residue cysteine 128 is the Proton donor of the active site. Position 128 is a 2-(S-cysteinyl)pyruvic acid O-phosphothioketal (cysteine 128). Aspartate 320 and isoleucine 342 together coordinate UDP-N-acetyl-alpha-D-glucosamine.

It belongs to the EPSP synthase family. MurA subfamily.

It is found in the cytoplasm. The enzyme catalyses phosphoenolpyruvate + UDP-N-acetyl-alpha-D-glucosamine = UDP-N-acetyl-3-O-(1-carboxyvinyl)-alpha-D-glucosamine + phosphate. It functions in the pathway cell wall biogenesis; peptidoglycan biosynthesis. In terms of biological role, cell wall formation. Adds enolpyruvyl to UDP-N-acetylglucosamine. This is UDP-N-acetylglucosamine 1-carboxyvinyltransferase from Synechococcus sp. (strain CC9605).